We begin with the raw amino-acid sequence, 125 residues long: Large ribosomal subunit protein bL12 (125 aa).

This sequence belongs to the bacterial ribosomal protein bL12 family. As to quaternary structure, homodimer. Part of the ribosomal stalk of the 50S ribosomal subunit. Forms a multimeric L10(L12)X complex, where L10 forms an elongated spine to which 2 to 4 L12 dimers bind in a sequential fashion. Binds GTP-bound translation factors.

Functionally, forms part of the ribosomal stalk which helps the ribosome interact with GTP-bound translation factors. Is thus essential for accurate translation. This is Large ribosomal subunit protein bL12 from Liberibacter africanus (Citrus greening disease).